A 336-amino-acid polypeptide reads, in one-letter code: Fructose-1,6-bisphosphatase class 1 (336 aa).

4 residues coordinate Mg(2+): Glu90, Asp112, Leu114, and Asp115. Substrate-binding positions include 115-118, Asn211, and Lys277; that span reads DGSS. Glu283 is a Mg(2+) binding site.

The protein belongs to the FBPase class 1 family. In terms of assembly, homotetramer. Requires Mg(2+) as cofactor.

It localises to the cytoplasm. The catalysed reaction is beta-D-fructose 1,6-bisphosphate + H2O = beta-D-fructose 6-phosphate + phosphate. The protein operates within carbohydrate biosynthesis; gluconeogenesis. The polypeptide is Fructose-1,6-bisphosphatase class 1 (Pseudomonas syringae pv. syringae (strain B728a)).